The primary structure comprises 807 residues: Lysyl oxidase homolog 3B (807 aa).

The first 24 residues, 1–24 (MELHQWCRHIIVFLLNVWIPSCFA), serve as a signal peptide directing secretion. SRCR domains follow at residues 49 to 150 (FRLS…VICK), 175 to 288 (VRLR…VSCV), 309 to 409 (TRLK…VRCN), 419 to 470 (VRIL…LGYA), and 476 to 579 (VRLS…VICS). Disulfide bonds link C75/C139, C88/C149, C119/C129, C207/C277, C220/C287, C254/C264, C334/C398, C347/C408, and C378/C388. The N-linked (GlcNAc...) asparagine glycan is linked to N272. An N-linked (GlcNAc...) asparagine glycan is attached at N392. Cystine bridges form between C514/C578 and C547/C557. Residue N536 is glycosylated (N-linked (GlcNAc...) asparagine). A glycan (N-linked (GlcNAc...) asparagine) is linked at N679. A cross-link (lysine tyrosylquinone (Lys-Tyr)) is located at residues 688-724 (KASFCLEDTDCDEGVSKRYKCANFGEQGITVGCWDLY). Y724 bears the 2',4',5'-topaquinone mark.

This sequence belongs to the lysyl oxidase family. Requires Cu cation as cofactor. Lysine tyrosylquinone residue is required as a cofactor. The lysine tyrosylquinone cross-link (LTQ) is generated by condensation of the epsilon-amino group of a lysine with a topaquinone produced by oxidation of tyrosine.

The protein resides in the secreted. Its subcellular location is the extracellular space. It is found in the cytoplasm. The protein localises to the nucleus. It catalyses the reaction L-lysyl-[protein] + O2 + H2O = (S)-2-amino-6-oxohexanoyl-[protein] + H2O2 + NH4(+). It carries out the reaction N(6)-acetyl-L-lysyl-[protein] + O2 + H2O = acetamide + (S)-2-amino-6-oxohexanoyl-[protein] + H2O2. Protein-lysine 6-oxidase that mediates the oxidation of peptidyl lysine residues to allysine in target proteins. Catalyzes the post-translational oxidative deamination of peptidyl lysine residues in precursors of elastin and different types of collagens, a prerequisite in the formation of cross-links between collagens and elastin. Can mediate oxidation of lysine residues that are acetylated. Also able to catalyze deacetylation of lysine residues. Required for maturation of neural crest derived cartilage elements. The chain is Lysyl oxidase homolog 3B from Danio rerio (Zebrafish).